Here is a 378-residue protein sequence, read N- to C-terminus: DNA primase small subunit PriS (378 aa).

Catalysis depends on residues D98, D100, and D282.

This sequence belongs to the eukaryotic-type primase small subunit family. Heterodimer of a small subunit (PriS) and a large subunit (PriL). Mg(2+) is required as a cofactor. It depends on Mn(2+) as a cofactor.

Its function is as follows. Catalytic subunit of DNA primase, an RNA polymerase that catalyzes the synthesis of short RNA molecules used as primers for DNA polymerase during DNA replication. The small subunit contains the primase catalytic core and has DNA synthesis activity on its own. Binding to the large subunit stabilizes and modulates the activity, increasing the rate of DNA synthesis while decreasing the length of the DNA fragments, and conferring RNA synthesis capability. The DNA polymerase activity may enable DNA primase to also catalyze primer extension after primer synthesis. May also play a role in DNA repair. This is DNA primase small subunit PriS from Methanosphaerula palustris (strain ATCC BAA-1556 / DSM 19958 / E1-9c).